The chain runs to 493 residues: MSEVRTRIAPSPTGDPHVGTAYIALFNMAFARKMGGKFILRIEDTDQTRSTPESEKMILDALRWLGLDWAEGPDVGGPYGPYRQSERGDIYGQYAQELIDKGHAFYAFETTEELDQMRNEQKEQGLPQKYDGRALNLTAEEVQAKLDAGVPYVIRMKIPEEGTCVVQDMLRGTIEIDWAQVDMQVLLKADGMPTYHLANVVDDHLMKITHVIRGEEWINSAPKHILLYQYFGWDMPTLCHMPLLRNPDKSKLSKRKNPTSILYYQRMGYMSEAVINYLGRMGWSMPDEREKFSLDEMIEHFDIQRVSLGGPVFDVEKLSWLNGMWIRENLTPETFAQKYVEWALNPEYLMKILPLVIPRVETFSDVADVAGFFLKGMLPITKEDFSSIKLEEETLRKAMQFALWRLEALSKWEKDEIFNEMKALAQVMEIKPKDFFAPLFVAISGTTASVSVFDSMAILGSDISRARMRTAVNVLGGPSKKEAKRWEKEYADL.

Residues 10–20 (PSPTGDPHVGT) carry the 'HIGH' region motif. Residues 251–255 (KLSKR) carry the 'KMSKS' region motif. K254 is an ATP binding site.

The protein belongs to the class-I aminoacyl-tRNA synthetase family. Glutamate--tRNA ligase type 1 subfamily. As to quaternary structure, monomer.

It is found in the cytoplasm. It catalyses the reaction tRNA(Glu) + L-glutamate + ATP = L-glutamyl-tRNA(Glu) + AMP + diphosphate. Its function is as follows. Catalyzes the attachment of glutamate to tRNA(Glu) in a two-step reaction: glutamate is first activated by ATP to form Glu-AMP and then transferred to the acceptor end of tRNA(Glu). The protein is Glutamate--tRNA ligase of Marinomonas sp. (strain MWYL1).